Reading from the N-terminus, the 96-residue chain is Co-chaperonin GroES (96 aa).

The protein belongs to the GroES chaperonin family. In terms of assembly, heptamer of 7 subunits arranged in a ring. Interacts with the chaperonin GroEL.

Its subcellular location is the cytoplasm. Together with the chaperonin GroEL, plays an essential role in assisting protein folding. The GroEL-GroES system forms a nano-cage that allows encapsulation of the non-native substrate proteins and provides a physical environment optimized to promote and accelerate protein folding. GroES binds to the apical surface of the GroEL ring, thereby capping the opening of the GroEL channel. This chain is Co-chaperonin GroES, found in Vibrio atlanticus (strain LGP32) (Vibrio splendidus (strain Mel32)).